Consider the following 950-residue polypeptide: Serine/threonine-protein kinase atg1 (950 aa).

In terms of domain architecture, Protein kinase spans 6-311 (YTRLDEIGRG…FPDFFENGVI (306 aa)). ATP-binding positions include 12 to 20 (IGRGSFATV) and Lys35. The active-site Proton acceptor is the Asp149. Disordered stretches follow at residues 314–425 (PIPG…HATA), 443–467 (RQRG…LREE), 505–570 (QGGI…QSPT), 671–690 (VQTD…NPDS), and 926–950 (PTPS…TPPK). Polar residues-rich tracts occupy residues 370–389 (GLTQ…PTTT), 447–458 (RNTFSEGSPQTD), and 511–520 (GAQTGALSRR). Residues 549 to 565 (SRADSMHNRQSSYERRY) show a composition bias toward basic and acidic residues.

The protein belongs to the protein kinase superfamily. Ser/Thr protein kinase family. APG1/unc-51/ULK1 subfamily. As to quaternary structure, homodimer. Forms a ternary complex with ATG13 and ATG17.

It localises to the cytoplasm. Its subcellular location is the preautophagosomal structure membrane. The enzyme catalyses L-seryl-[protein] + ATP = O-phospho-L-seryl-[protein] + ADP + H(+). It catalyses the reaction L-threonyl-[protein] + ATP = O-phospho-L-threonyl-[protein] + ADP + H(+). Functionally, serine/threonine protein kinase involved in the cytoplasm to vacuole transport (Cvt) and found to be essential in autophagy, where it is required for the formation of autophagosomes. Involved in the clearance of protein aggregates which cannot be efficiently cleared by the proteasome. Required for selective autophagic degradation of the nucleus (nucleophagy) as well as for mitophagy which contributes to regulate mitochondrial quantity and quality by eliminating the mitochondria to a basal level to fulfill cellular energy requirements and preventing excess ROS production. Also involved in endoplasmic reticulum-specific autophagic process, in selective removal of ER-associated degradation (ERAD) substrates. Plays a key role in ATG9 and ATG23 cycling through the pre-autophagosomal structure and is necessary to promote ATG18 binding to ATG9 through phosphorylation of ATG9. Catalyzes phosphorylation of ATG4, decreasing the interaction between ATG4 and ATG8 and impairing deconjugation of PE-conjugated forms of ATG8. This chain is Serine/threonine-protein kinase atg1, found in Neosartorya fischeri (strain ATCC 1020 / DSM 3700 / CBS 544.65 / FGSC A1164 / JCM 1740 / NRRL 181 / WB 181) (Aspergillus fischerianus).